We begin with the raw amino-acid sequence, 466 residues long: Asparagine--tRNA ligase (466 aa).

This sequence belongs to the class-II aminoacyl-tRNA synthetase family. Homodimer.

Its subcellular location is the cytoplasm. The catalysed reaction is tRNA(Asn) + L-asparagine + ATP = L-asparaginyl-tRNA(Asn) + AMP + diphosphate + H(+). This Shewanella baltica (strain OS185) protein is Asparagine--tRNA ligase.